Consider the following 1942-residue polypeptide: MSSDAEMAVFGEAAPYLRKSEKERIEAQNKPFDAKSSVFVVDAKESFVKATVQSREGGKVTAKTEGGTTVTVKDDQVYPMNPPKYDKIEDMAMMTHLHEPAVLYNLKERYAAWMIYTYSGLFCVTVNPYKWLPVYNAEVVAAYRGKKRQEAPPHIFSISDNAYQFMLTDRENQSILITGESGAGKTVNTKRVIQYFATIAVTGEKKKEEATSGKMQGTLEDQIISANPLLEAFGNAKTVRNDNSSRFGKFIRIHFGTTGKLASADIETYLLEKSRVTFQLKAERSYHIFYQIMSNKKPDLIEMLLITTNPYDYAFVSQGEITVPSIDDQEELMATDSAIDILGFTSDERVSIYKLTGAVMHYGNMKFKQKQREEQAEPDGTEVADKAAYLQNLNSADLLKALCYPRVKVGNEYVTKGQTVQQVYNSVGALAKAVYEKMFLWMVTRINQQLDTKQPRQYFIGVLDIAGFEIFDFNSLEQLCINFTNEKLQQFFNHHMFVLEQEEYKKEGIEWEFIDFGMDLAACIELIEKPMGIFSILEEECMFPKATDTSFKNKLYEQHLGKSNNFQKPKPAKGKVEAHFSLVHYAGTVDYNIAGWLDKNKDPLNETVVGLYQKSSMKTLAYLFSGAAAAAEAESGGGGGKKGAKKKGSSFQTVSALFRENLNKLMTNLRSTHPHFVRCIIPNETKTPGAMEHELVLHQLRCNGVLEGIRICRKGFPSRILYADFKQRYKVLNASAIPEGQFIDSKKASEKLLGSIDIDHTQYKFGHTKVFFKAGLLGLLEEMRDDKLAQLITRTQAMCRGYLARVEYQKMVERRESIFCIQYNVRAFMNVKHWPWMKLYFKIKPLLKSAETEKEMANMKEEFEKAKENLAKAEAKRKELEEKMVALMQEKNDLQLQVQSEADSLADAEERCDQLIKTKIQLEAKIKEVTERAEDEEEINAELTAKKRKLEDECSELKKDIDDLELTLAKVEKEKHATENKVKNLTEEMAGLDETIAKLTKEKKALQEAHQQTLDDLQAEEDKVNTLTKAKIKLEQQVDDLEGSLEQEKKIRMDLERAKRKLEGDLKLAQESTMDVENDKQQLDEKLKKKEFEMSNLQSKIEDEQALGMQLQKKIKELQARIEELEEEIEAERASRAKAEKQRSDLSRELEEISERLEEAGGATSAQIEMNKKREAEFQKMRRDLEEATLQHEATAATLRKKHADSVAELGEQIDNLQRVKQKLEKEKSEMKMEIDDLASNMEVISKSKGNLEKMCRTLEDQVSELKTKEEEQQRLINELTAQRGRLQTESGEYSRQLDEKDSLVSQLSRGKQAFTQQIEELKRQLEEEIKAKSALAHALQSSRHDCDLLREQYEEEQEAKAELQRAMSKANSEVAQWRTKYETDAIQRTEELEEAKKKLAQRLQDAEEHVEAVNAKCASLEKTKQRLQNEVEDLMIDVERTNAACAALDKKQRNFDKILAEWKQKYEETHAELEASQKESRSLSTELFKIKNAYEESLDHLETLKRENKNLQQEISDLTEQIAEGGKRIHELEKIKKQIEQEKSELQAALEEAEASLEHEEGKILRIQLELNQVKSEIDRKIAEKDEEIDQLKRNHIRVVESMQSTLDAEIRSRNDAIRLKKKMEGDLNEMEIQLNHSNRMAAEALRNYRNTQGILKDTQLHLDDALRGQEDLKEQLAMVERRANLLQAEIEELRATLEQTERSRKIAEQELLDASERVQLLHTQNTSLINTKKKLETDISQIQGEMEDIVQEARNAEEKAKKAITDAAMMAEELKKEQDTSAHLERMKKNLEQTVKDLQHRLDEAEQLALKGGKKQIQKLEARVRELEGEVENEQKRNVEAIKGLRKHERRVKELTYQTEEDRKNVLRLQDLVDKLQSKVKAYKRQAEEAEEQSNVNLAKFRKIQHELEEAEERADIAESQVNKLRVKSREVHTKIISEE.

One can recognise a Myosin N-terminal SH3-like domain in the interval 33–82; that stretch reads DAKSSVFVVDAKESFVKATVQSREGGKVTAKTEGGTTVTVKDDQVYPMNP. Ser-36 carries the phosphoserine modification. Phosphothreonine occurs at positions 64 and 69. A Myosin motor domain is found at 86-785; it reads DKIEDMAMMT…LLGLLEEMRD (700 aa). Lys-130 carries the N6,N6,N6-trimethyllysine modification. Position 179-186 (179-186) interacts with ATP; that stretch reads GESGAGKT. Tyr-389 carries the phosphotyrosine modification. The residue at position 419 (Thr-419) is a Phosphothreonine. Tyr-424 carries the phosphotyrosine modification. Ser-625 is modified (phosphoserine). Residues 662 to 684 are actin-binding; the sequence is LNKLMTNLRSTHPHFVRCIIPNE. His-760 carries the post-translational modification Pros-methylhistidine. The tract at residues 764-778 is actin-binding; it reads KFGHTKVFFKAGLLG. The region spanning 788–817 is the IQ domain; it reads LAQLITRTQAMCRGYLARVEYQKMVERRES. Residues 846–1942 are a coiled coil; the sequence is LLKSAETEKE…EVHTKIISEE (1097 aa). Ser-1095, Ser-1099, Ser-1165, Ser-1240, and Ser-1246 each carry phosphoserine. Residues 1156-1175 are disordered; that stretch reads RLEEAGGATSAQIEMNKKRE. A Phosphothreonine modification is found at Thr-1258. Ser-1264 carries the post-translational modification Phosphoserine. Phosphothreonine occurs at positions 1268 and 1289. 4 positions are modified to phosphoserine: Ser-1291, Ser-1295, Ser-1306, and Ser-1309. Position 1467 is a phosphotyrosine (Tyr-1467). Thr-1470 carries the post-translational modification Phosphothreonine. Ser-1477 carries the post-translational modification Phosphoserine. Tyr-1495 bears the Phosphotyrosine mark. Ser-1498 is modified (phosphoserine). The residue at position 1504 (Thr-1504) is a Phosphothreonine. Position 1517 is a phosphoserine (Ser-1517). A Phosphothreonine modification is found at Thr-1520. Phosphoserine is present on residues Ser-1545, Ser-1557, Ser-1577, Ser-1603, Ser-1606, Ser-1717, and Ser-1729. Phosphothreonine occurs at positions 1733 and 1739. Ser-1742 carries the post-translational modification Phosphoserine.

Belongs to the TRAFAC class myosin-kinesin ATPase superfamily. Myosin family. In terms of assembly, muscle myosin is a hexameric protein that consists of 2 heavy chain subunits (MHC), 2 alkali light chain subunits (MLC) and 2 regulatory light chain subunits (MLC-2). Interacts with SLC26A5. In terms of tissue distribution, expressed in the cochlea (at protein level). Strongly expressed in spiral ganglion neurons with axonal sprouts and supporting cells around hair cells. In the organ of Corti, it is expressed in inner and outer hair cells, and in supporting cells.

Its subcellular location is the cytoplasm. It localises to the myofibril. In terms of biological role, required for normal hearing. It plays a role in cochlear amplification of auditory stimuli, likely through the positive regulation of prestin (SLC26A5) activity and outer hair cell (OHC) electromotility. In Mus musculus (Mouse), this protein is Myosin-1.